The primary structure comprises 169 residues: Cell division inhibitor SulA (169 aa).

Positions Ala106–Tyr112 are ftsZ binding. The tract at residues Lys162–His169 is lon protease binding.

It belongs to the SulA family. As to quaternary structure, interacts with FtsZ. Is rapidly cleaved and degraded by the Lon protease once DNA damage is repaired.

In terms of biological role, component of the SOS system and an inhibitor of cell division. Accumulation of SulA causes rapid cessation of cell division and the appearance of long, non-septate filaments. In the presence of GTP, binds a polymerization-competent form of FtsZ in a 1:1 ratio, thus inhibiting FtsZ polymerization and therefore preventing it from participating in the assembly of the Z ring. This mechanism prevents the premature segregation of damaged DNA to daughter cells during cell division. The chain is Cell division inhibitor SulA from Escherichia coli O45:K1 (strain S88 / ExPEC).